Reading from the N-terminus, the 1079-residue chain is DNA annealing helicase and endonuclease ZRANB3 (1079 aa).

The region spanning 46–208 (IFALKRNGRC…FMQIEALFPQ (163 aa)) is the Helicase ATP-binding domain. A DNA annealing helicase activity region spans residues 46-481 (IFALKRNGRC…GRKEKIQAEE (436 aa)). An ATP-binding site is contributed by 59–66 (DEMGLGKT). The DEAH box signature appears at 157–160 (DESH). Residues 325-481 (AVKDYIKMML…GRKEKIQAEE (157 aa)) enclose the Helicase C-terminal domain. The short motif at 519–526 (QHDIRSFF) is the PIP-box element. S569 carries the post-translational modification Phosphoserine. The tract at residues 582–601 (ASEDHCSPSEETPSQSKQIR) is disordered. Polar residues predominate over residues 590-600 (SEETPSQSKQI). The RanBP2-type zinc finger occupies 621–650 (PVEGWQCSLCTYINNSELPYCEMCETPQGS). (Microbial infection) S-methylcysteine is present on C630. Positions 689 to 725 (LAQSEPGQLADSKEETPKIEKEDGLTSQPGNEQWKSS) are disordered. The segment covering 699–712 (DSKEETPKIEKEDG) has biased composition (basic and acidic residues). Over residues 713 to 725 (LTSQPGNEQWKSS) the composition is skewed to polar residues. The HNH domain maps to 1011–1051 (PGEGHFWQVDHIKPVYGGGGQCSLDNLQTLCTVCHKERTAR). The segment at 1011-1079 (PGEGHFWQVD…SDITRFLVKK (69 aa)) is endonuclease activity. An APIM motif motif is present at residues 1074 to 1078 (RFLVK).

This sequence belongs to the SNF2/RAD54 helicase family. Interacts (via PIP-box and RanBP2-type zinc finger) with PCNA (when PCNA is polyubiquitinated via 'Lys-63'-linked polyubiquitin). In terms of processing, (Microbial infection) Methylation at Cys-630 by enteropathogenic E.coli protein NleE or S.flexneri protein OspZ: methylation disrupts ability to bind 'Lys-63'-linked ubiquitin.

It is found in the nucleus. Its subcellular location is the chromosome. Its function is as follows. DNA annealing helicase and endonuclease required to maintain genome stability at stalled or collapsed replication forks by facilitating fork restart and limiting inappropriate recombination that could occur during template switching events. Recruited to the sites of stalled DNA replication by polyubiquitinated PCNA and acts as a structure-specific endonuclease that cleaves the replication fork D-loop intermediate, generating an accessible 3'-OH group in the template of the leading strand, which is amenable to extension by DNA polymerase. In addition to endonuclease activity, also catalyzes the fork regression via annealing helicase activity in order to prevent disintegration of the replication fork and the formation of double-strand breaks. In Homo sapiens (Human), this protein is DNA annealing helicase and endonuclease ZRANB3.